Reading from the N-terminus, the 318-residue chain is Carnitine monooxygenase reductase subunit (318 aa).

Residues 5-107 (YEMFPAVVTR…SEPKNLFPLA (103 aa)) form the FAD-binding FR-type domain. In terms of domain architecture, 2Fe-2S ferredoxin-type spans 233–318 (FTVVLAKSNQ…AKGKKLVLDL (86 aa)). Residues cysteine 267, cysteine 272, cysteine 275, and cysteine 305 each contribute to the [2Fe-2S] cluster site.

This sequence belongs to the PDR/VanB family. CntB subfamily. As to quaternary structure, composed of an oxygenase subunit (cntA) and a reductase subunit (cntB). Requires FMN as cofactor. The cofactor is [2Fe-2S] cluster.

It carries out the reaction (R)-carnitine + NADH + O2 + H(+) = (3R)-3-hydroxy-4-oxobutanoate + trimethylamine + NAD(+) + H2O. The catalysed reaction is (R)-carnitine + NADPH + O2 + H(+) = (3R)-3-hydroxy-4-oxobutanoate + trimethylamine + NADP(+) + H2O. Its pathway is amine and polyamine metabolism; carnitine metabolism. Its function is as follows. Converts carnitine to trimethylamine and malic semialdehyde. The protein is Carnitine monooxygenase reductase subunit of Acinetobacter baumannii (strain ATCC 19606 / DSM 30007 / JCM 6841 / CCUG 19606 / CIP 70.34 / NBRC 109757 / NCIMB 12457 / NCTC 12156 / 81).